We begin with the raw amino-acid sequence, 1435 residues long: Gag-Pol polyprotein (1435 aa).

Gly2 carries the N-myristoyl glycine; by host lipid modification. The segment at 7 to 31 is interaction with Gp41; the sequence is VLSGGELDRWEKIRLRPGGKKKYKL. The interval 8–43 is interaction with host CALM1; sequence LSGGELDRWEKIRLRPGGKKKYKLKHIVWASRELER. The segment at 12–19 is interaction with host AP3D1; the sequence is ELDRWEKI. Positions 14-33 are interaction with membrane phosphatidylinositol 4,5-bisphosphate and RNA; the sequence is DRWEKIRLRPGGKKKYKLKH. Residues 16 to 22 carry the Nuclear export signal motif; that stretch reads WEKIRLR. Positions 26-32 match the Nuclear localization signal motif; the sequence is KKKYKLK. Residues 73–77 form an interaction with membrane phosphatidylinositol 4,5-bisphosphate region; that stretch reads EELKS. A disordered region spans residues 106–127; it reads EEQNKSKKKAQQAAADTGNSSQ. Tyr132 carries the phosphotyrosine; by host modification. An interaction with human PPIA/CYPA and NUP153 region spans residues 189–227; the sequence is NTVGGHQAAMQMLKETINEEAAEWDRLHPVQAGPVAPGQ. Residues 277–363 are dimerization/Multimerization of capsid protein p24; the sequence is YSPSSILDIK…GGPGHKARVL (87 aa). CCHC-type zinc fingers lie at residues 390–407 and 411–428; these read VKCF…NCRA and KGCW…DCTE. A dimerization of protease region spans residues 489–493; that stretch reads PQITL. In terms of domain architecture, Peptidase A2 spans 508-577; that stretch reads KEALLDTGAD…TPVNIIGRNL (70 aa). Asp513 acts as the For protease activity; shared with dimeric partner in catalysis. Dimerization of protease stretches follow at residues 537–543 and 576–588; these read GIGGFIK and NLLT…LNFP. One can recognise a Reverse transcriptase domain in the interval 631-821; it reads EGKISKIGPE…PPFLWMGYEL (191 aa). Mg(2+)-binding residues include Asp697, Asp772, and Asp773. Residues 814-822 form an RT 'primer grip' region; it reads FLWMGYELH. The Tryptophan repeat motif signature appears at 985-1001; the sequence is WEAWWTDYWQATWIPEW. The region spanning 1021–1144 is the RNase H type-1 domain; it reads IVGAETFYVD…VDKLVSAGIR (124 aa). The Mg(2+) site is built by Asp1030, Glu1065, Asp1085, and Asp1136. The Integrase-type zinc-finger motif lies at 1150–1191; it reads DGIDKAQEEHEKYHTNWRAMASDFNLPPVVAKEIVASCNKCQ. 4 residues coordinate Zn(2+): His1159, His1163, Cys1187, and Cys1190. The Integrase catalytic domain occupies 1201 to 1351; sequence VDCSPGIWQL…SAGERIVDII (151 aa). Mg(2+)-binding residues include Asp1211, Asp1263, and Glu1299. The integrase-type DNA-binding region spans 1370–1417; sequence FRVYYRDSRDPLWKGPAKLLWKGEGAVVIQDNSDIKVVPRRKAKIIRD.

Homotrimer; further assembles as hexamers of trimers. Interacts with gp41 (via C-terminus). Interacts with host CALM1; this interaction induces a conformational change in the Matrix protein, triggering exposure of the myristate group. Interacts with host AP3D1; this interaction allows the polyprotein trafficking to multivesicular bodies during virus assembly. Part of the pre-integration complex (PIC) which is composed of viral genome, matrix protein, Vpr and integrase. As to quaternary structure, homodimer; the homodimer further multimerizes as homohexamers or homopentamers. Interacts with human PPIA/CYPA; This interaction stabilizes the capsid. Interacts with human NUP153. Interacts with host PDZD8; this interaction stabilizes the capsid. Interacts with monkey TRIM5; this interaction destabilizes the capsid. In terms of assembly, homodimer, whose active site consists of two apposed aspartic acid residues. Heterodimer of p66 RT and p51 RT (RT p66/p51). Heterodimerization of RT is essential for DNA polymerase activity. The overall folding of the subdomains is similar in p66 RT and p51 RT but the spatial arrangements of the subdomains are dramatically different. As to quaternary structure, homotetramer; may further associate as a homohexadecamer. Part of the pre-integration complex (PIC) which is composed of viral genome, matrix protein, Vpr and integrase. Interacts with human SMARCB1/INI1 and human PSIP1/LEDGF isoform 1. Interacts with human KPNA3; this interaction might play a role in nuclear import of the pre-integration complex. Interacts with human NUP153; this interaction might play a role in nuclear import of the pre-integration complex. Mg(2+) is required as a cofactor. Specific enzymatic cleavages by the viral protease yield mature proteins. The protease is released by autocatalytic cleavage. The polyprotein is cleaved during and after budding, this process is termed maturation. Proteolytic cleavage of p66 RT removes the RNase H domain to yield the p51 RT subunit. Nucleocapsid protein p7 might be further cleaved after virus entry. Post-translationally, tyrosine phosphorylated presumably in the virion by a host kinase. Phosphorylation is apparently not a major regulator of membrane association. In terms of processing, phosphorylated possibly by host MAPK1; this phosphorylation is necessary for Pin1-mediated virion uncoating. Methylated by host PRMT6, impairing its function by reducing RNA annealing and the initiation of reverse transcription.

The protein localises to the host cell membrane. The protein resides in the host endosome. It localises to the host multivesicular body. Its subcellular location is the virion membrane. It is found in the host nucleus. The protein localises to the host cytoplasm. The protein resides in the virion. It carries out the reaction Specific for a P1 residue that is hydrophobic, and P1' variable, but often Pro.. The catalysed reaction is Endohydrolysis of RNA in RNA/DNA hybrids. Three different cleavage modes: 1. sequence-specific internal cleavage of RNA. Human immunodeficiency virus type 1 and Moloney murine leukemia virus enzymes prefer to cleave the RNA strand one nucleotide away from the RNA-DNA junction. 2. RNA 5'-end directed cleavage 13-19 nucleotides from the RNA end. 3. DNA 3'-end directed cleavage 15-20 nucleotides away from the primer terminus.. The enzyme catalyses 3'-end directed exonucleolytic cleavage of viral RNA-DNA hybrid.. It catalyses the reaction DNA(n) + a 2'-deoxyribonucleoside 5'-triphosphate = DNA(n+1) + diphosphate. With respect to regulation, protease: The viral protease is inhibited by many synthetic protease inhibitors (PIs), such as amprenavir, atazanavir, indinavir, loprinavir, nelfinavir, ritonavir and saquinavir. Use of protease inhibitors in tritherapy regimens permit more ambitious therapeutic strategies. Reverse transcriptase/ribonuclease H: RT can be inhibited either by nucleoside RT inhibitors (NRTIs) or by non nucleoside RT inhibitors (NNRTIs). NRTIs act as chain terminators, whereas NNRTIs inhibit DNA polymerization by binding a small hydrophobic pocket near the RT active site and inducing an allosteric change in this region. Classical NRTIs are abacavir, adefovir (PMEA), didanosine (ddI), lamivudine (3TC), stavudine (d4T), tenofovir (PMPA), zalcitabine (ddC), and zidovudine (AZT). Classical NNRTIs are atevirdine (BHAP U-87201E), delavirdine, efavirenz (DMP-266), emivirine (I-EBU), and nevirapine (BI-RG-587). The tritherapies used as a basic effective treatment of AIDS associate two NRTIs and one NNRTI. In terms of biological role, mediates, with Gag polyprotein, the essential events in virion assembly, including binding the plasma membrane, making the protein-protein interactions necessary to create spherical particles, recruiting the viral Env proteins, and packaging the genomic RNA via direct interactions with the RNA packaging sequence (Psi). Gag-Pol polyprotein may regulate its own translation, by the binding genomic RNA in the 5'-UTR. At low concentration, the polyprotein would promote translation, whereas at high concentration, the polyprotein would encapsidate genomic RNA and then shut off translation. Targets the polyprotein to the plasma membrane via a multipartite membrane-binding signal, that includes its myristoylated N-terminus. Matrix protein is part of the pre-integration complex. Implicated in the release from host cell mediated by Vpu. Binds to RNA. Functionally, forms the conical core that encapsulates the genomic RNA-nucleocapsid complex in the virion. Most core are conical, with only 7% tubular. The core is constituted by capsid protein hexamer subunits. The core is disassembled soon after virion entry. Host restriction factors such as TRIM5-alpha or TRIMCyp bind retroviral capsids and cause premature capsid disassembly, leading to blocks in reverse transcription. Capsid restriction by TRIM5 is one of the factors which restricts HIV-1 to the human species. Host PIN1 apparently facilitates the virion uncoating. On the other hand, interactions with PDZD8 or CYPA stabilize the capsid. Its function is as follows. Encapsulates and protects viral dimeric unspliced genomic RNA (gRNA). Binds these RNAs through its zinc fingers. Acts as a nucleic acid chaperone which is involved in rearangement of nucleic acid secondary structure during gRNA retrotranscription. Also facilitates template switch leading to recombination. As part of the polyprotein, participates in gRNA dimerization, packaging, tRNA incorporation and virion assembly. In terms of biological role, aspartyl protease that mediates proteolytic cleavages of Gag and Gag-Pol polyproteins during or shortly after the release of the virion from the plasma membrane. Cleavages take place as an ordered, step-wise cascade to yield mature proteins. This process is called maturation. Displays maximal activity during the budding process just prior to particle release from the cell. Also cleaves Nef and Vif, probably concomitantly with viral structural proteins on maturation of virus particles. Hydrolyzes host EIF4GI and PABP1 in order to shut off the capped cellular mRNA translation. The resulting inhibition of cellular protein synthesis serves to ensure maximal viral gene expression and to evade host immune response. Also mediates cleavage of host YTHDF3. Mediates cleavage of host CARD8, thereby activating the CARD8 inflammasome, leading to the clearance of latent HIV-1 in patient CD4(+) T-cells after viral reactivation; in contrast, HIV-1 can evade CARD8-sensing when its protease remains inactive in infected cells prior to viral budding. Multifunctional enzyme that converts the viral RNA genome into dsDNA in the cytoplasm, shortly after virus entry into the cell. This enzyme displays a DNA polymerase activity that can copy either DNA or RNA templates, and a ribonuclease H (RNase H) activity that cleaves the RNA strand of RNA-DNA heteroduplexes in a partially processive 3' to 5' endonucleasic mode. Conversion of viral genomic RNA into dsDNA requires many steps. A tRNA(3)-Lys binds to the primer-binding site (PBS) situated at the 5'-end of the viral RNA. RT uses the 3' end of the tRNA primer to perform a short round of RNA-dependent minus-strand DNA synthesis. The reading proceeds through the U5 region and ends after the repeated (R) region which is present at both ends of viral RNA. The portion of the RNA-DNA heteroduplex is digested by the RNase H, resulting in a ssDNA product attached to the tRNA primer. This ssDNA/tRNA hybridizes with the identical R region situated at the 3' end of viral RNA. This template exchange, known as minus-strand DNA strong stop transfer, can be either intra- or intermolecular. RT uses the 3' end of this newly synthesized short ssDNA to perform the RNA-dependent minus-strand DNA synthesis of the whole template. RNase H digests the RNA template except for two polypurine tracts (PPTs) situated at the 5'-end and near the center of the genome. It is not clear if both polymerase and RNase H activities are simultaneous. RNase H probably can proceed both in a polymerase-dependent (RNA cut into small fragments by the same RT performing DNA synthesis) and a polymerase-independent mode (cleavage of remaining RNA fragments by free RTs). Secondly, RT performs DNA-directed plus-strand DNA synthesis using the PPTs that have not been removed by RNase H as primers. PPTs and tRNA primers are then removed by RNase H. The 3' and 5' ssDNA PBS regions hybridize to form a circular dsDNA intermediate. Strand displacement synthesis by RT to the PBS and PPT ends produces a blunt ended, linear dsDNA copy of the viral genome that includes long terminal repeats (LTRs) at both ends. Functionally, catalyzes viral DNA integration into the host chromosome, by performing a series of DNA cutting and joining reactions. This enzyme activity takes place after virion entry into a cell and reverse transcription of the RNA genome in dsDNA. The first step in the integration process is 3' processing. This step requires a complex comprising the viral genome, matrix protein, Vpr and integrase. This complex is called the pre-integration complex (PIC). The integrase protein removes 2 nucleotides from each 3' end of the viral DNA, leaving recessed CA OH's at the 3' ends. In the second step, the PIC enters cell nucleus. This process is mediated through integrase and Vpr proteins, and allows the virus to infect a non dividing cell. This ability to enter the nucleus is specific of lentiviruses, other retroviruses cannot and rely on cell division to access cell chromosomes. In the third step, termed strand transfer, the integrase protein joins the previously processed 3' ends to the 5' ends of strands of target cellular DNA at the site of integration. The 5'-ends are produced by integrase-catalyzed staggered cuts, 5 bp apart. A Y-shaped, gapped, recombination intermediate results, with the 5'-ends of the viral DNA strands and the 3' ends of target DNA strands remaining unjoined, flanking a gap of 5 bp. The last step is viral DNA integration into host chromosome. This involves host DNA repair synthesis in which the 5 bp gaps between the unjoined strands are filled in and then ligated. Since this process occurs at both cuts flanking the HIV genome, a 5 bp duplication of host DNA is produced at the ends of HIV-1 integration. Alternatively, Integrase may catalyze the excision of viral DNA just after strand transfer, this is termed disintegration. The polypeptide is Gag-Pol polyprotein (gag-pol) (Human immunodeficiency virus type 1 group M subtype B (strain 89.6) (HIV-1)).